The following is a 92-amino-acid chain: Small ribosomal subunit protein uS19c (92 aa).

Belongs to the universal ribosomal protein uS19 family.

The protein resides in the plastid. It localises to the chloroplast. Protein S19 forms a complex with S13 that binds strongly to the 16S ribosomal RNA. The sequence is that of Small ribosomal subunit protein uS19c (rps19) from Picea abies (Norway spruce).